We begin with the raw amino-acid sequence, 144 residues long: Flagellar assembly factor FliW (144 aa).

It belongs to the FliW family. As to quaternary structure, interacts with translational regulator CsrA and flagellin(s).

The protein localises to the cytoplasm. Acts as an anti-CsrA protein, binds CsrA and prevents it from repressing translation of its target genes, one of which is flagellin. Binds to flagellin and participates in the assembly of the flagellum. The protein is Flagellar assembly factor FliW of Bacillus pumilus (strain SAFR-032).